We begin with the raw amino-acid sequence, 275 residues long: Low affinity immunoglobulin gamma Fc region receptor III-A (275 aa).

Residues 1-23 (MSVWTSRKAAEDNDTSLSSGIRA) form the signal peptide. The Extracellular segment spans residues 24 to 207 (GLQKAVVTLH…SPSTFPPWHQ (184 aa)). Ig-like C2-type domains follow at residues 28-92 (AVVT…YTCQ) and 101-192 (PVNL…LRIT). 2 disulfide bridges follow: cysteine 49-cysteine 91 and cysteine 131-cysteine 175. Residues asparagine 65, asparagine 168, and asparagine 183 are each glycosylated (N-linked (GlcNAc...) asparagine). A helical transmembrane segment spans residues 208-228 (ITFCLLIGLLFTIDTVMYFSV). Over 229–275 (QKGLRRSTADYEEPEVHWSKEPENKTISEEKQSFRSSRANSETPENR) the chain is Cytoplasmic. The tract at residues 237 to 275 (ADYEEPEVHWSKEPENKTISEEKQSFRSSRANSETPENR) is disordered. Tyrosine 239 is modified (phosphotyrosine). The segment covering 242 to 261 (PEVHWSKEPENKTISEEKQS) has biased composition (basic and acidic residues). Positions 262 to 275 (FRSSRANSETPENR) are enriched in polar residues.

As to quaternary structure, forms a heterooligomeric complex with ITAM-containing signaling subunits FCER1G. Interacts (via transmembrane domain) with signaling subunits; this interaction is a prerequisite for receptor complex expression on the cell surface and intracellular signal transduction. Binds the Fc region of antigen-complexed IgG. In terms of processing, N-glycosylated. Post-translationally, phosphorylated following receptor ligation.

The protein resides in the cell membrane. In terms of biological role, receptor for the invariable Fc fragment of immunoglobulin gamma (IgG). Binds with intermediate affinity to both IgG2a and IgG2b. Can bind to IgG2a and IgG2b monomers. Does not display binding to IgG1 or IgG3. Recognizes neutralizing virus-specific IgGs displayed on the cell surface of infected cells and triggers antibody-dependent cellular cytotoxicity (ADCC). Confers protection to lethal influenza virus infection. On splenic dendritic cells, uptakes antigen immune complexes and efficiently divert them into MHC class I and II antigen presentation pathways to provide for superior priming of CD4-positive and CD8-positive T cell immune responses. Mediates neutrophil activation by IgG complexes redundantly with FCGR2A. Plays a role in promoting bone resorption by enhancing osteoclast differentiation following binding to IgG2a. Also acts as a receptor for the Fc region of immunoglobulin epsilon (IgE). Binds with low affinity to both the a and b allotypes of IgE. Has also been shown to bind to IgE allotype a only but not to allotype b. Binds aggregated IgE but not the monomeric form and bound monomeric IgG is readily displaced by IgE complexes. Binding to IgE promotes macrophage-mediated phagocytosis, antigen presentation to T cells, production of pro-inflammatory cytokines and the late phase of cutaneous allergic reactions. Mediates enhanced ADCC in response to afucosylated IgGs. The chain is Low affinity immunoglobulin gamma Fc region receptor III-A from Cricetulus griseus (Chinese hamster).